A 558-amino-acid chain; its full sequence is Aurovertin biosynthesis cluster transcription factor aurF (558 aa).

It belongs to the POU transcription factor family. Class-3 subfamily.

It localises to the nucleus. Its function is as follows. Transcription factor that regulates the expression of the gene cluster that mediates the biosynthesis of aurovertins, fungal polyketides that exhibit potent inhibition of adenosine triphosphate synthase. This Calcarisporium arbuscula (Dendryphion arbuscula) protein is Aurovertin biosynthesis cluster transcription factor aurF.